A 315-amino-acid chain; its full sequence is tRNA dimethylallyltransferase (315 aa).

Gly-15–Ser-22 contacts ATP. Thr-17–Ser-22 contacts substrate. Interaction with substrate tRNA regions lie at residues Asp-40–Leu-43 and Gln-162–Arg-166.

The protein belongs to the IPP transferase family. Monomer. The cofactor is Mg(2+).

The enzyme catalyses adenosine(37) in tRNA + dimethylallyl diphosphate = N(6)-dimethylallyladenosine(37) in tRNA + diphosphate. Functionally, catalyzes the transfer of a dimethylallyl group onto the adenine at position 37 in tRNAs that read codons beginning with uridine, leading to the formation of N6-(dimethylallyl)adenosine (i(6)A). This is tRNA dimethylallyltransferase from Buchnera aphidicola subsp. Acyrthosiphon pisum (strain APS) (Acyrthosiphon pisum symbiotic bacterium).